The following is a 323-amino-acid chain: Thymidylate synthase (323 aa).

DUMP-binding positions include arginine 21 and 172-173 (RR). Cysteine 192 serves as the catalytic Nucleophile. Residues 214–217 (RSND), asparagine 225, and 255–257 (HVY) contribute to the dUMP site. Aspartate 217 serves as a coordination point for (6R)-5,10-methylene-5,6,7,8-tetrahydrofolate. A (6R)-5,10-methylene-5,6,7,8-tetrahydrofolate-binding site is contributed by alanine 322.

The protein belongs to the thymidylate synthase family. Bacterial-type ThyA subfamily. Homodimer.

It is found in the cytoplasm. It carries out the reaction dUMP + (6R)-5,10-methylene-5,6,7,8-tetrahydrofolate = 7,8-dihydrofolate + dTMP. The protein operates within pyrimidine metabolism; dTTP biosynthesis. Catalyzes the reductive methylation of 2'-deoxyuridine-5'-monophosphate (dUMP) to 2'-deoxythymidine-5'-monophosphate (dTMP) while utilizing 5,10-methylenetetrahydrofolate (mTHF) as the methyl donor and reductant in the reaction, yielding dihydrofolate (DHF) as a by-product. This enzymatic reaction provides an intracellular de novo source of dTMP, an essential precursor for DNA biosynthesis. This chain is Thymidylate synthase, found in Pseudomonas syringae pv. tomato (strain ATCC BAA-871 / DC3000).